The following is a 741-amino-acid chain: Catalase-peroxidase (741 aa).

The signal sequence occupies residues 1–23; the sequence is MLKKIVTALGMSGMLLASSNAIA. The segment at residues 102–223 is a cross-link (tryptophyl-tyrosyl-methioninium (Trp-Tyr) (with M-249)); it reads WHDAGTYRIY…YAATQMGLIY (122 aa). The active-site Proton acceptor is histidine 103. Residues 223 to 249 constitute a cross-link (tryptophyl-tyrosyl-methioninium (Tyr-Met) (with W-102)); it reads YVNPEGPDGKPDIKGAASEIRQAFRAM. Histidine 264 contributes to the heme b binding site.

This sequence belongs to the peroxidase family. Peroxidase/catalase subfamily. Homodimer or homotetramer. Heme b is required as a cofactor. In terms of processing, formation of the three residue Trp-Tyr-Met cross-link is important for the catalase, but not the peroxidase activity of the enzyme.

It catalyses the reaction H2O2 + AH2 = A + 2 H2O. The catalysed reaction is 2 H2O2 = O2 + 2 H2O. Its function is as follows. Bifunctional enzyme with both catalase and broad-spectrum peroxidase activity. This Francisella tularensis subsp. tularensis (strain FSC 198) protein is Catalase-peroxidase.